The following is a 213-amino-acid chain: Pyrrolidone-carboxylate peptidase (213 aa).

Residues Glu-80, Cys-143, and His-165 contribute to the active site.

It belongs to the peptidase C15 family. Homotetramer.

It localises to the cytoplasm. It catalyses the reaction Release of an N-terminal pyroglutamyl group from a polypeptide, the second amino acid generally not being Pro.. Its function is as follows. Removes 5-oxoproline from various penultimate amino acid residues except L-proline. The chain is Pyrrolidone-carboxylate peptidase from Erwinia tasmaniensis (strain DSM 17950 / CFBP 7177 / CIP 109463 / NCPPB 4357 / Et1/99).